The sequence spans 260 residues: 21S rRNA pseudouridine(2819) synthase (260 aa).

D68 is a catalytic residue.

The protein belongs to the pseudouridine synthase RluA family.

It localises to the mitochondrion. It catalyses the reaction uridine(2819) in 21S rRNA = pseudouridine(2819) in 21S rRNA. In terms of biological role, pseudouridylate synthase responsible for the pseudouridine-2819 formation in mitochondrial 21S rRNA. May modulate the efficiency or the fidelity of the mitochondrial translation machinery. In Eremothecium gossypii (strain ATCC 10895 / CBS 109.51 / FGSC 9923 / NRRL Y-1056) (Yeast), this protein is 21S rRNA pseudouridine(2819) synthase (PUS5).